The following is a 2167-amino-acid chain: Glutamate synthase 1 [NADH], chloroplastic (2167 aa).

The interval 1 to 31 (MSAAQGMAYKLRTDAAPTGAGRRARRSHSSV) is disordered. The N-terminal 36 residues, 1–36 (MSAAQGMAYKLRTDAAPTGAGRRARRSHSSVAAPYR), are a transit peptide targeting the chloroplast. The active-site Nucleophile is cysteine 100. Residues 100–504 (CGVGFVAELS…PGMMLLVDFE (405 aa)) form the Glutamine amidotransferase type-2 domain. The interval 1022–1042 (KSNTGEGGEQPSRMEPLANGS) is disordered. Position 1192–1249 (1192–1249 (LAETHQTLVANGLRGRAILQTDGQLKTGKDVAVACLLGAEEFGFSTAPLITLGCIMMR)) interacts with FMN. 3 residues coordinate [3Fe-4S] cluster: cysteine 1245, cysteine 1251, and cysteine 1256. 1956–1970 (GGGDTGTDCIGTSIR) is a binding site for NAD(+).

The protein belongs to the glutamate synthase family. In terms of assembly, monomer. The cofactor is [3Fe-4S] cluster. Requires FAD as cofactor. FMN is required as a cofactor. In terms of tissue distribution, highly expressed in roots.

Its subcellular location is the plastid. It localises to the chloroplast. It carries out the reaction 2 L-glutamate + NAD(+) = L-glutamine + 2-oxoglutarate + NADH + H(+). The protein operates within amino-acid biosynthesis; L-glutamate biosynthesis via GLT pathway; L-glutamate from 2-oxoglutarate and L-glutamine (NAD(+) route): step 1/1. It functions in the pathway energy metabolism; nitrogen metabolism. Involved in glutamate biosynthesis and plays a major role in the primary ammonium ions assimilation in seedling roots. May be involved in the reutilization of glutamine in developing organs. Plays a role in the development of tillers. This chain is Glutamate synthase 1 [NADH], chloroplastic, found in Oryza sativa subsp. japonica (Rice).